The sequence spans 147 residues: Protein SPMIP3 (147 aa).

In Homo sapiens (Human), this protein is Protein SPMIP3.